The chain runs to 54 residues: Zinc-containing ferredoxin A (54 aa).

The disordered stretch occupies residues 1-21 (GIDPNYRTSRPEVGTHEGHKV). Residues 1 to 36 (GIDPNYRTSRPEVGTHEGHKVYGPVENPKVLGIHGA) are N-terminal extension. Residues 9-20 (SRPEVGTHEGHK) are compositionally biased toward basic and acidic residues. Positions 16 and 19 each coordinate Zn(2+). Position 29 is an N6-methyllysine (Lys-29). His-34 provides a ligand contact to Zn(2+). The region spanning 35 to 54 (GAIVGVDFDLCIADGSCINA) is the 4Fe-4S ferredoxin-type 1 domain. [3Fe-4S] cluster-binding residues include Cys-45 and Cys-51.

The cofactor is [3Fe-4S] cluster. [4Fe-4S] cluster is required as a cofactor. It depends on Zn(2+) as a cofactor.

Functionally, ferredoxins are iron-sulfur proteins that transfer electrons in a wide variety of metabolic reactions. The sequence is that of Zinc-containing ferredoxin A (zfx) from Sulfuracidifex metallicus (Sulfolobus metallicus).